The sequence spans 614 residues: Vitamin B12 transporter BtuB (614 aa).

A signal peptide spans 1–20 (MIKKATLLTAFSVTAFSAWA). Residues 26–33 (DTLVVTAN) carry the TonB box motif. Residues 38–152 (PRSAVLAPVT…IGGVVNIITT (115 aa)) enclose the TBDR plug domain. Cyanocob(III)alamin contacts are provided by residues Ser-85, Asn-92, and 110 to 111 (VS). The region spanning 155–614 (NPGTELTAGW…EYTLSGSYTF (460 aa)) is the TBDR beta-barrel domain. Transmembrane regions (beta stranded) follow at residues 158-165 (TELTAGWG), 169-178 (YQNYDISTQQ), and 184-195 (TRATLIGDYEYT). Asp-199, Gln-211, Asp-213, and Asp-215 together coordinate Ca(2+). 2 consecutive transmembrane segments (beta stranded) span residues 217 to 227 (FLSKTLYGALE) and 232 to 248 (DRWS…NRTD). Ca(2+) contacts are provided by Tyr-249 and Asp-250. Ala-251 contacts cyanocob(III)alamin. Asp-261 is a Ca(2+) binding site. 14 consecutive transmembrane segments (beta stranded) span residues 263-277 (RKLY…LRFN), 279-296 (ERIQ…KDYN), 309-325 (TLDE…NSVV), 328-337 (HGNVGAGVDW), 353-369 (YDQR…QQLG), 371-381 (FTLEAAARSDD), 385-400 (FGRH…WEFI), 403-417 (YRFI…KAPN), 434-443 (KSKQWEGAFE), 449-458 (VSWRISGYRN), 473-490 (YYNE…TANF), 494-509 (PLTH…ARNA), 517-529 (RRSK…QLDW), and 535-550 (DWGV…YDSD). Thr-309 contacts cyanocob(III)alamin. Position 517 (Arg-517) interacts with cyanocob(III)alamin. Tyr-551 is a cyanocob(III)alamin binding site. 3 beta stranded membrane passes run 558–572 (TVKM…LTVA), 585–596 (IANLFDKDYETV), and 602–614 (AGRE…SYTF). The short motif at 597 to 614 (YGYQTAGREYTLSGSYTF) is the TonB C-terminal box element.

Belongs to the TonB-dependent receptor family. BtuB (TC 1.B.14.3.1) subfamily.

The protein resides in the cell outer membrane. Functionally, involved in the active translocation of vitamin B12 (cyanocobalamin) across the outer membrane to the periplasmic space. It derives its energy for transport by interacting with the trans-periplasmic membrane protein TonB. The sequence is that of Vitamin B12 transporter BtuB from Salmonella choleraesuis (strain SC-B67).